Consider the following 218-residue polypeptide: Phosphatidylserine decarboxylase proenzyme (218 aa).

Ser188 functions as the Schiff-base intermediate with substrate; via pyruvic acid in the catalytic mechanism. Ser188 carries the pyruvic acid (Ser); by autocatalysis modification.

This sequence belongs to the phosphatidylserine decarboxylase family. PSD-A subfamily. In terms of assembly, heterodimer of a large membrane-associated beta subunit and a small pyruvoyl-containing alpha subunit. Pyruvate is required as a cofactor. Post-translationally, is synthesized initially as an inactive proenzyme. Formation of the active enzyme involves a self-maturation process in which the active site pyruvoyl group is generated from an internal serine residue via an autocatalytic post-translational modification. Two non-identical subunits are generated from the proenzyme in this reaction, and the pyruvate is formed at the N-terminus of the alpha chain, which is derived from the carboxyl end of the proenzyme. The post-translation cleavage follows an unusual pathway, termed non-hydrolytic serinolysis, in which the side chain hydroxyl group of the serine supplies its oxygen atom to form the C-terminus of the beta chain, while the remainder of the serine residue undergoes an oxidative deamination to produce ammonia and the pyruvoyl prosthetic group on the alpha chain.

Its subcellular location is the cell membrane. It catalyses the reaction a 1,2-diacyl-sn-glycero-3-phospho-L-serine + H(+) = a 1,2-diacyl-sn-glycero-3-phosphoethanolamine + CO2. It functions in the pathway phospholipid metabolism; phosphatidylethanolamine biosynthesis; phosphatidylethanolamine from CDP-diacylglycerol: step 2/2. Catalyzes the formation of phosphatidylethanolamine (PtdEtn) from phosphatidylserine (PtdSer). This Streptomyces coelicolor (strain ATCC BAA-471 / A3(2) / M145) protein is Phosphatidylserine decarboxylase proenzyme.